Consider the following 341-residue polypeptide: MADFFMTNLWPLIVVIGQSVLLIVVLLISIAYILLADRKIWAAVQIRRGPNVVGPWGLLQSFADLLKMILKEPMIPSGANKGVFLLAPLVTCVLALSAWAVIPVSAGWVIADINVGVLYILAVSSLSVYGIIMAGWSSNSKYPFLAALRSAAQMVSYEVSIGFVIICVLLCVGSLNLTAIVQAQNSQWGVLGWYWLPLFPMFVVFYVSALAETNRPPFDLVEAESELVAGFMVEYSSTPYMLFVLGEYVAIVTMCAMGTILFLGGWLPPVPYAPFTWVPGIVWFALKVLFMFFMFAMAKAIVPRYRYDQLMRLGWKVFLPLSLAMVVIVAAVLQFAGLAPK.

The next 8 helical transmembrane spans lie at 13–33, 82–102, 115–135, 161–181, 190–210, 242–262, 277–297, and 317–337; these read IVVI…IAYI, GVFL…WAVI, VGVL…IMAG, IGFV…TAIV, VLGW…VSAL, LFVL…TILF, WVPG…MFAM, and VFLP…QFAG.

This sequence belongs to the complex I subunit 1 family. In terms of assembly, NDH-1 is composed of 14 different subunits. Subunits NuoA, H, J, K, L, M, N constitute the membrane sector of the complex.

It localises to the cell inner membrane. It carries out the reaction a quinone + NADH + 5 H(+)(in) = a quinol + NAD(+) + 4 H(+)(out). Functionally, NDH-1 shuttles electrons from NADH, via FMN and iron-sulfur (Fe-S) centers, to quinones in the respiratory chain. The immediate electron acceptor for the enzyme in this species is believed to be ubiquinone. Couples the redox reaction to proton translocation (for every two electrons transferred, four hydrogen ions are translocated across the cytoplasmic membrane), and thus conserves the redox energy in a proton gradient. This subunit may bind ubiquinone. This is NADH-quinone oxidoreductase subunit H 2 from Rhodopseudomonas palustris (strain HaA2).